The chain runs to 727 residues: Probable glutamate carboxypeptidase ARB_02390 (727 aa).

Positions 1-18 (MIVKSLSLLALAAATVEG) are cleaved as a signal peptide. N-linked (GlcNAc...) asparagine glycans are attached at residues Asn-60 and Asn-80. Residues 158 to 296 (ATAEYVYVGR…ISQLDAQPIL (139 aa)) form the PA domain. Arg-197 is a binding site for substrate. Asn-223 carries an N-linked (GlcNAc...) asparagine glycan. The tract at residues 255–279 (FPGDPTTPGYPSRPDSPRKDKSPVV) is disordered. Ca(2+) contacts are provided by Thr-261 and Tyr-264. The tract at residues 266–565 (SRPDSPRKDK…QFLGLLGYHL (300 aa)) is NAALADase. Asn-310, Asn-319, and Asn-353 each carry an N-linked (GlcNAc...) asparagine glycan. Residue His-366 coordinates Zn(2+). The For NAALADase activity role is filled by Glu-414. Glu-415 contributes to the Zn(2+) binding site. Positions 423 and 426 each coordinate Ca(2+). Asp-443 provides a ligand contact to Zn(2+). Substrate is bound by residues 516 to 518 (TGA) and Tyr-530. Residue His-531 coordinates Zn(2+). Ser-604 functions as the Charge relay system in the catalytic mechanism. Asn-614 is a glycosylation site (N-linked (GlcNAc...) asparagine). His-665 serves as the catalytic Charge relay system. 675–676 (GY) is a binding site for substrate. Asn-692 carries N-linked (GlcNAc...) asparagine glycosylation.

Belongs to the peptidase M28 family. M28B subfamily. It depends on Zn(2+) as a cofactor.

The protein localises to the secreted. The enzyme catalyses Release of an unsubstituted, C-terminal glutamyl residue, typically from Ac-Asp-Glu or folylpoly-gamma-glutamates.. Its function is as follows. Has both folate hydrolase and N-acetylated-alpha-linked-acidic dipeptidase (NAALADase) activity. Also exhibits a dipeptidyl-peptidase IV type activity. This is Probable glutamate carboxypeptidase ARB_02390 from Arthroderma benhamiae (strain ATCC MYA-4681 / CBS 112371) (Trichophyton mentagrophytes).